The chain runs to 134 residues: Small ribosomal subunit protein uS8c (134 aa).

The protein belongs to the universal ribosomal protein uS8 family. Part of the 30S ribosomal subunit.

The protein localises to the plastid. It is found in the chloroplast. In terms of biological role, one of the primary rRNA binding proteins, it binds directly to 16S rRNA central domain where it helps coordinate assembly of the platform of the 30S subunit. The polypeptide is Small ribosomal subunit protein uS8c (rps8) (Lotus japonicus (Lotus corniculatus var. japonicus)).